Consider the following 463-residue polypeptide: NADH dehydrogenase [ubiquinone] iron-sulfur protein 2, mitochondrial (463 aa).

Residues 1–33 (MAALRALRCLRGVGAPVLRPGSGIRLPSQPSRG) constitute a mitochondrion transit peptide. Residue lysine 62 is modified to N6-acetyllysine. Arginine 118 carries the symmetric dimethylarginine modification. Residues cysteine 326, cysteine 332, and cysteine 347 each contribute to the [4Fe-4S] cluster site.

This sequence belongs to the complex I 49 kDa subunit family. As to quaternary structure, core subunit of respiratory chain NADH dehydrogenase (Complex I) which is composed of 45 different subunits. Component of the iron-sulfur (IP) fragment of the enzyme. Interacts with NDUFAF3. Interacts with NDUFAF7. Interacts with CERS2. It depends on [4Fe-4S] cluster as a cofactor. In terms of processing, dimethylation at Arg-118 by NDUFAF7 takes place after NDUFS2 assembles into the complex I, leading to stabilize the early intermediate complex.

The protein localises to the mitochondrion inner membrane. It carries out the reaction a ubiquinone + NADH + 5 H(+)(in) = a ubiquinol + NAD(+) + 4 H(+)(out). Functionally, core subunit of the mitochondrial membrane respiratory chain NADH dehydrogenase (Complex I) which catalyzes electron transfer from NADH through the respiratory chain, using ubiquinone as an electron acceptor. Essential for the catalytic activity and assembly of complex I. Redox-sensitive, critical component of the oxygen-sensing pathway in the pulmonary vasculature which plays a key role in acute pulmonary oxygen-sensing and hypoxic pulmonary vasoconstriction. Plays an important role in carotid body sensing of hypoxia. Essential for glia-like neural stem and progenitor cell proliferation, differentiation and subsequent oligodendrocyte or neuronal maturation. The chain is NADH dehydrogenase [ubiquinone] iron-sulfur protein 2, mitochondrial (Ndufs2) from Mus musculus (Mouse).